A 476-amino-acid polypeptide reads, in one-letter code: Glycogen synthase (476 aa).

Position 15 (lysine 15) interacts with ADP-alpha-D-glucose.

Belongs to the glycosyltransferase 1 family. Bacterial/plant glycogen synthase subfamily.

It carries out the reaction [(1-&gt;4)-alpha-D-glucosyl](n) + ADP-alpha-D-glucose = [(1-&gt;4)-alpha-D-glucosyl](n+1) + ADP + H(+). It participates in glycan biosynthesis; glycogen biosynthesis. Its function is as follows. Synthesizes alpha-1,4-glucan chains using ADP-glucose. This Streptococcus mutans serotype c (strain ATCC 700610 / UA159) protein is Glycogen synthase.